The chain runs to 378 residues: Queuine tRNA-ribosyltransferase (378 aa).

Catalysis depends on Asp-91, which acts as the Proton acceptor. Substrate-binding positions include 91–95 (DSGGF), Asp-145, Gln-189, and Gly-216. The tract at residues 247–253 (GVGKPED) is RNA binding. Residue Asp-266 is the Nucleophile of the active site. An RNA binding; important for wobble base 34 recognition region spans residues 271–275 (TRNAR). The Zn(2+) site is built by Cys-304, Cys-306, Cys-309, and His-335.

The protein belongs to the queuine tRNA-ribosyltransferase family. In terms of assembly, homodimer. Within each dimer, one monomer is responsible for RNA recognition and catalysis, while the other monomer binds to the replacement base PreQ1. It depends on Zn(2+) as a cofactor.

The enzyme catalyses 7-aminomethyl-7-carbaguanine + guanosine(34) in tRNA = 7-aminomethyl-7-carbaguanosine(34) in tRNA + guanine. Its pathway is tRNA modification; tRNA-queuosine biosynthesis. Catalyzes the base-exchange of a guanine (G) residue with the queuine precursor 7-aminomethyl-7-deazaguanine (PreQ1) at position 34 (anticodon wobble position) in tRNAs with GU(N) anticodons (tRNA-Asp, -Asn, -His and -Tyr). Catalysis occurs through a double-displacement mechanism. The nucleophile active site attacks the C1' of nucleotide 34 to detach the guanine base from the RNA, forming a covalent enzyme-RNA intermediate. The proton acceptor active site deprotonates the incoming PreQ1, allowing a nucleophilic attack on the C1' of the ribose to form the product. After dissociation, two additional enzymatic reactions on the tRNA convert PreQ1 to queuine (Q), resulting in the hypermodified nucleoside queuosine (7-(((4,5-cis-dihydroxy-2-cyclopenten-1-yl)amino)methyl)-7-deazaguanosine). The polypeptide is Queuine tRNA-ribosyltransferase (Vibrio campbellii (strain ATCC BAA-1116)).